Reading from the N-terminus, the 1451-residue chain is ABC transporter G family member 32 (1451 aa).

One can recognise an ABC transporter 1 domain in the interval glycine 162–glutamine 435. ATP is bound at residue glycine 195–threonine 202. One can recognise an ABC transmembrane type-2 1 domain in the interval alanine 513–phenylalanine 725. The next 6 membrane-spanning stretches (helical) occupy residues phenylalanine 531–phenylalanine 551, glycine 563–alanine 583, isoleucine 618–phenylalanine 638, leucine 650–glycine 670, valine 674–isoleucine 694, and isoleucine 760–leucine 780. The interval isoleucine 809–threonine 835 is disordered. Basic and acidic residues predominate over residues cysteine 813–glutamine 823. The ABC transporter 2 domain maps to leucine 853–glutamate 1105. Glycine 898–threonine 905 contacts ATP. In terms of domain architecture, ABC transmembrane type-2 2 spans threonine 1178–phenylalanine 1392. 7 consecutive transmembrane segments (helical) span residues tyrosine 1197–tryptophan 1217, tyrosine 1237–valine 1257, leucine 1285–phenylalanine 1305, phenylalanine 1312–methionine 1332, isoleucine 1342–isoleucine 1362, tryptophan 1373–glycine 1393, and leucine 1423–isoleucine 1443.

It belongs to the ABC transporter superfamily. ABCG family. PDR (TC 3.A.1.205) subfamily.

Its subcellular location is the membrane. Its function is as follows. May be a general defense protein. The polypeptide is ABC transporter G family member 32 (Oryza sativa subsp. japonica (Rice)).